We begin with the raw amino-acid sequence, 260 residues long: 3'-5' ssDNA/RNA exonuclease TatD (260 aa).

A divalent metal cation contacts are provided by glutamate 92, histidine 128, and histidine 153.

This sequence belongs to the metallo-dependent hydrolases superfamily. TatD-type hydrolase family. TatD subfamily. As to quaternary structure, monomer. It depends on Mg(2+) as a cofactor.

The protein localises to the cytoplasm. 3'-5' exonuclease that prefers single-stranded DNA and RNA. May play a role in the H(2)O(2)-induced DNA damage repair. The sequence is that of 3'-5' ssDNA/RNA exonuclease TatD from Yersinia pseudotuberculosis serotype O:3 (strain YPIII).